Here is a 194-residue protein sequence, read N- to C-terminus: Ancillary SecYEG translocon subunit (194 aa).

At 1–10 (MHLNKMKKVS) the chain is on the cytoplasmic side. A helical transmembrane segment spans residues 11–31 (LKTYLVLFFLIFFIFCSFWFI). Residues 32-194 (KPKEKKLKLE…INMKINEIKR (163 aa)) lie on the Periplasmic side of the membrane.

It belongs to the YfgM family. As to quaternary structure, interacts with the SecYEG translocon. Forms a complex with PpiD.

The protein localises to the cell inner membrane. In terms of biological role, may mediate protein transfer from the SecYEG translocon to the periplasmic chaperone network via its periplasmic C-terminal region. This chain is Ancillary SecYEG translocon subunit, found in Buchnera aphidicola subsp. Schizaphis graminum (strain Sg).